Here is a 241-residue protein sequence, read N- to C-terminus: Ubiquinone biosynthesis O-methyltransferase (241 aa).

Arg46, Gly66, Asp87, and Met131 together coordinate S-adenosyl-L-methionine.

This sequence belongs to the methyltransferase superfamily. UbiG/COQ3 family.

It catalyses the reaction a 3-demethylubiquinol + S-adenosyl-L-methionine = a ubiquinol + S-adenosyl-L-homocysteine + H(+). The enzyme catalyses a 3-(all-trans-polyprenyl)benzene-1,2-diol + S-adenosyl-L-methionine = a 2-methoxy-6-(all-trans-polyprenyl)phenol + S-adenosyl-L-homocysteine + H(+). It participates in cofactor biosynthesis; ubiquinone biosynthesis. Functionally, O-methyltransferase that catalyzes the 2 O-methylation steps in the ubiquinone biosynthetic pathway. The chain is Ubiquinone biosynthesis O-methyltransferase from Bordetella avium (strain 197N).